We begin with the raw amino-acid sequence, 283 residues long: Phosphate import ATP-binding protein PstB (283 aa).

The segment covering 1–20 has biased composition (polar residues); the sequence is MAQTLAQTKQISQSHTFDVS. Positions 1–32 are disordered; that stretch reads MAQTLAQTKQISQSHTFDVSQSHHKTPDDTNS. Residues 37–278 enclose the ABC transporter domain; the sequence is YSTQNLDLWY…PSNKKTEDYI (242 aa). Position 69 to 76 (69 to 76) interacts with ATP; the sequence is GPSGCGKS.

Belongs to the ABC transporter superfamily. Phosphate importer (TC 3.A.1.7) family. As to quaternary structure, the complex is composed of two ATP-binding proteins (PstB), two transmembrane proteins (PstC and PstA) and a solute-binding protein (PstS).

The protein localises to the cell membrane. It catalyses the reaction phosphate(out) + ATP + H2O = ADP + 2 phosphate(in) + H(+). Functionally, part of the ABC transporter complex PstSACB involved in phosphate import. Responsible for energy coupling to the transport system. In Staphylococcus aureus (strain USA300), this protein is Phosphate import ATP-binding protein PstB.